An 888-amino-acid polypeptide reads, in one-letter code: CRISPR-associated endonuclease/helicase Cas3 (888 aa).

One can recognise an HD Cas3-type domain in the interval 20-231 (KGNDIHLLIY…AGFCSLADWL (212 aa)). Asp-75 and His-160 together coordinate Mg(2+). In terms of domain architecture, Helicase ATP-binding spans 301–504 (DALPVAPGLT…LDTYGLHTDP (204 aa)). 314–321 (APTGSGKT) lines the ATP pocket. Positions 452–455 (DEVH) match the DEAH box motif. In terms of domain architecture, Helicase C-terminal spans 556-735 (MLERMIAAAN…AYRQWLDSIY (180 aa)).

In the N-terminal section; belongs to the CRISPR-associated nuclease Cas3-HD family. This sequence in the central section; belongs to the CRISPR-associated helicase Cas3 family. As to quaternary structure, interacts with the CasA subunit of Cascade once Cascade has recognized target DNA. Mg(2+) serves as cofactor.

In terms of biological role, CRISPR (clustered regularly interspaced short palindromic repeat), is an adaptive immune system that provides protection against mobile genetic elements (viruses, transposable elements and conjugative plasmids). CRISPR clusters contain sequences complementary to antecedent mobile elements and target invading nucleic acids. CRISPR clusters are transcribed and processed into CRISPR RNA (crRNA). Cas3 plus Cascade participate in CRISPR interference, the third stage of CRISPR immunity. Acts as an endonuclease, a 3'-5'exonuclease, and an ATP-dependent dsDNA helicase. Anneals and unwinds R-loops (in which crRNA binds the target DNA, displacing the noncomplementary strand). Unwinding requires ATP, annealing does not. Required along with the Cascade complex for resistance to bacteriophage lambda infection as well as the ability to cure CRISPR-encoding high-copy number plasmid. A Cas3-CasA fusion protein purified with the Cascade complex nicks target plasmid in the presence but not absence of Mg(2+), and degrades plasmid fully in the presence of Mg(2+) and ATP, suggesting the helicase activity is required for complete degradation. This is CRISPR-associated endonuclease/helicase Cas3 (ygcB) from Escherichia coli (strain K12).